We begin with the raw amino-acid sequence, 339 residues long: tRNA methyltransferase 10 homolog A (339 aa).

Disordered stretches follow at residues M1–K90 and D282–H339. The segment covering N14–E35 has biased composition (basic and acidic residues). Positions K52 to E81 form a coiled coil. The segment covering R61 to L74 has biased composition (basic residues). Positions R89–V279 constitute an SAM-dependent MTase TRM10-type domain. A compositionally biased stretch (acidic residues) spans G300 to E309. Residues E310 to T330 are compositionally biased toward basic and acidic residues. S336 is subject to Phosphoserine.

The protein belongs to the class IV-like SAM-binding methyltransferase superfamily. TRM10 family. In terms of assembly, interacts with tRNA. In terms of tissue distribution, expressed in embryonic and fetal brain. It is expressed throughout the dorsal telencephalon at 8 and 11 weeks of gestation, with highest expression in ventricular zone and marginal zone. Detected in cerebellar cortex and nuclei, but not in dorsal telencephalon, at later stages.

It localises to the nucleus. It is found in the nucleolus. The enzyme catalyses guanosine(9) in tRNA + S-adenosyl-L-methionine = N(1)-methylguanosine(9) in tRNA + S-adenosyl-L-homocysteine + H(+). In terms of biological role, S-adenosyl-L-methionine-dependent guanine N(1)-methyltransferase that catalyzes the formation of N(1)-methylguanine at position 9 (m1G9) in tRNAs. Probably not able to catalyze formation of N(1)-methyladenine at position 9 (m1A9) in tRNAs. The chain is tRNA methyltransferase 10 homolog A (TRMT10A) from Homo sapiens (Human).